The chain runs to 562 residues: Delta-1-pyrroline-5-carboxylate dehydrogenase, mitochondrial (562 aa).

The N-terminal 23 residues, 1–23, are a transit peptide targeting the mitochondrion; the sequence is MLPLPSLRRSLLSHAWRGAGLRW. Lysine 30 is subject to N6-succinyllysine. Serine 43 carries the phosphoserine modification. Lysine 51 is modified (N6-acetyllysine). 5 positions are modified to N6-acetyllysine; alternate: lysine 92, lysine 98, lysine 113, lysine 129, and lysine 174. 5 positions are modified to N6-succinyllysine; alternate: lysine 92, lysine 98, lysine 113, lysine 129, and lysine 174. NAD(+)-binding positions include serine 207, lysine 232, and 285-289; that span reads GSVPT. Residue glutamate 313 is the Proton acceptor of the active site. Lysine 317 carries the N6-acetyllysine modification. The residue at position 346 (lysine 346) is an N6-succinyllysine. Residue cysteine 347 is the Nucleophile of the active site. Lysine 357 is modified (N6-acetyllysine; alternate). Lysine 357 is subject to N6-succinyllysine; alternate. N6-acetyllysine occurs at positions 364 and 375. The residue at position 394 (lysine 394) is an N6-succinyllysine. Glutamate 446 contributes to the NAD(+) binding site. An N6-acetyllysine modification is found at lysine 461. Lysine 508 carries the post-translational modification N6-acetyllysine; alternate. The residue at position 508 (lysine 508) is an N6-succinyllysine; alternate. Serine 512 contributes to the substrate binding site. An N6-acetyllysine mark is found at lysine 530 and lysine 551.

Belongs to the aldehyde dehydrogenase family. As to quaternary structure, homodimer. Acetylation of Lys-98, Lys-113 and Lys-401 is observed in liver mitochondria from fasted mice but not from fed mice.

It is found in the mitochondrion matrix. The catalysed reaction is L-glutamate 5-semialdehyde + NAD(+) + H2O = L-glutamate + NADH + 2 H(+). The protein operates within amino-acid degradation; L-proline degradation into L-glutamate; L-glutamate from L-proline: step 2/2. Functionally, irreversible conversion of delta-1-pyrroline-5-carboxylate (P5C), derived either from proline or ornithine, to glutamate. This is a necessary step in the pathway interconnecting the urea and tricarboxylic acid cycles. The preferred substrate is glutamic gamma-semialdehyde, other substrates include succinic, glutaric and adipic semialdehydes. This chain is Delta-1-pyrroline-5-carboxylate dehydrogenase, mitochondrial (Aldh4a1), found in Mus musculus (Mouse).